The primary structure comprises 169 residues: Phosphopantetheine adenylyltransferase (169 aa).

Residue serine 10 coordinates substrate. Residues 10–11 (SF) and histidine 18 contribute to the ATP site. Residues lysine 42, leucine 74, and arginine 88 each contribute to the substrate site. ATP-binding positions include 89–91 (GLR), glutamate 99, and 124–130 (YAFLSSS).

This sequence belongs to the bacterial CoaD family. As to quaternary structure, homohexamer. Mg(2+) serves as cofactor.

Its subcellular location is the cytoplasm. It catalyses the reaction (R)-4'-phosphopantetheine + ATP + H(+) = 3'-dephospho-CoA + diphosphate. It participates in cofactor biosynthesis; coenzyme A biosynthesis; CoA from (R)-pantothenate: step 4/5. Its function is as follows. Reversibly transfers an adenylyl group from ATP to 4'-phosphopantetheine, yielding dephospho-CoA (dPCoA) and pyrophosphate. This Geobacillus sp. (strain WCH70) protein is Phosphopantetheine adenylyltransferase.